A 274-amino-acid chain; its full sequence is Carbonic anhydrase (274 aa).

Zn(2+)-binding residues include cysteine 39, histidine 98, and cysteine 101. The tract at residues glutamate 214 to arginine 274 is disordered. Composition is skewed to basic and acidic residues over residues proline 234 to threonine 245 and leucine 261 to arginine 274.

The protein belongs to the beta-class carbonic anhydrase family. As to quaternary structure, a hexamer formed by a trimer of dimers. Interacts with the first 260 residues of CcmM; both the N-terminal 206 residues and the C-terminal tail contribute to CcmM binding. Interacts with full-length and the N-terminal 249 residues of CcmM. A probable CcmM-CcaA-CcmN complex as well as a CcaA-RuBisCO-CcmM complex can also be isolated. The cofactor is Zn(2+).

The protein localises to the carboxysome. It catalyses the reaction hydrogencarbonate + H(+) = CO2 + H2O. Inhibited by ethoxyzolamide. Reversible hydration of carbon dioxide. Essential to photosynthetic carbon dioxide fixation, supplies CO(2) to RuBisCO (ribulose bisphosphate carboxylase, rbcL-rbcS) in the carboxysome. This is Carbonic anhydrase from Synechocystis sp. (strain ATCC 27184 / PCC 6803 / Kazusa).